A 239-amino-acid polypeptide reads, in one-letter code: MIALAGQTPDVIAILPAAGIGSRMQTALPKQYLTIGNKTLLEHAIDALLCHPCISEAVVAISAEDRWFYQLPVAADPRVRVVTGGSVRADSVMAALRCASAASWVLVHDAARPCLHQDDLRRLLVITAHTEVGGLLATPVRDTMKRAHTGSDIIAATVEREDLWHALTPQLFARDLLITCLERALAEGATVTDEASALEYCGYAPLLVPGRVDNIKVTRPEDLALARFFFSQLANTESV.

Belongs to the IspD/TarI cytidylyltransferase family. IspD subfamily. As to quaternary structure, homodimer.

It catalyses the reaction 2-C-methyl-D-erythritol 4-phosphate + CTP + H(+) = 4-CDP-2-C-methyl-D-erythritol + diphosphate. Its pathway is isoprenoid biosynthesis; isopentenyl diphosphate biosynthesis via DXP pathway; isopentenyl diphosphate from 1-deoxy-D-xylulose 5-phosphate: step 2/6. In terms of biological role, catalyzes the formation of 4-diphosphocytidyl-2-C-methyl-D-erythritol from CTP and 2-C-methyl-D-erythritol 4-phosphate (MEP). This chain is 2-C-methyl-D-erythritol 4-phosphate cytidylyltransferase, found in Sodalis glossinidius (strain morsitans).